Consider the following 357-residue polypeptide: Peptide chain release factor 1 (357 aa).

Glutamine 233 bears the N5-methylglutamine mark.

This sequence belongs to the prokaryotic/mitochondrial release factor family. In terms of processing, methylated by PrmC. Methylation increases the termination efficiency of RF1.

The protein localises to the cytoplasm. Peptide chain release factor 1 directs the termination of translation in response to the peptide chain termination codons UAG and UAA. In Syntrophus aciditrophicus (strain SB), this protein is Peptide chain release factor 1.